The sequence spans 478 residues: Cytochrome c-552 (478 aa).

A signal peptide spans M1–A26. A heme c-binding site is contributed by H94. Residues C122, C125, and K126 each contribute to the heme site. Heme c is bound by residues C160, C163, H164, C209, C212, and H213. The Ca(2+) site is built by E215, Y216, K261, and Q263. A substrate-binding site is contributed by Y216. H264 serves as a coordination point for substrate. Heme c-binding residues include H275, C282, C285, H286, H301, C314, C317, H318, and H393.

The protein belongs to the cytochrome c-552 family. Ca(2+) is required as a cofactor. The cofactor is heme c.

It is found in the periplasm. It carries out the reaction 6 Fe(III)-[cytochrome c] + NH4(+) + 2 H2O = 6 Fe(II)-[cytochrome c] + nitrite + 8 H(+). The protein operates within nitrogen metabolism; nitrate reduction (assimilation). Catalyzes the reduction of nitrite to ammonia, consuming six electrons in the process. The sequence is that of Cytochrome c-552 from Salmonella arizonae (strain ATCC BAA-731 / CDC346-86 / RSK2980).